Consider the following 207-residue polypeptide: MKIIHKGLVEYLPTFEAMKTFNANRTASTEDELWVVEHPPVFTQGLAGKPEHLLIRDDIPIVQIDRGGQITYHGPGQLVVYTMIDFKRRKTSVRNIVSALENSIIATLAEYGIEAAADPKRPGVYVGERKIASLGLRIKGGSVYHGLALNVNMDLSPFTHINPCGYAGMEMTQIADFVQPCPTPDEVAAKLTAHLETQFTPKADNNE.

The region spanning 27 to 203 (ASTEDELWVV…HLETQFTPKA (177 aa)) is the BPL/LPL catalytic domain. Residues 66–73 (RGGQITYH), 133–135 (SLG), and 146–148 (GLA) contribute to the substrate site. C164 serves as the catalytic Acyl-thioester intermediate.

This sequence belongs to the LipB family.

The protein resides in the cytoplasm. It catalyses the reaction octanoyl-[ACP] + L-lysyl-[protein] = N(6)-octanoyl-L-lysyl-[protein] + holo-[ACP] + H(+). It functions in the pathway protein modification; protein lipoylation via endogenous pathway; protein N(6)-(lipoyl)lysine from octanoyl-[acyl-carrier-protein]: step 1/2. Catalyzes the transfer of endogenously produced octanoic acid from octanoyl-acyl-carrier-protein onto the lipoyl domains of lipoate-dependent enzymes. Lipoyl-ACP can also act as a substrate although octanoyl-ACP is likely to be the physiological substrate. The protein is Octanoyltransferase of Neisseria meningitidis serogroup C / serotype 2a (strain ATCC 700532 / DSM 15464 / FAM18).